The primary structure comprises 455 residues: Epoxide hydrolase 1 (455 aa).

Residues 1-21 form a helical; Signal-anchor for type III membrane protein membrane-spanning segment; the sequence is MWLEILLTSVLGFAIYWFISR. Over 22 to 455 the chain is Cytoplasmic; sequence DKEETLPLED…RKFLSVLERQ (434 aa). The Nucleophile role is filled by D226. R295 is subject to Dimethylated arginine. Y374 serves as the catalytic Proton donor. The active-site Proton acceptor is the H431.

This sequence belongs to the peptidase S33 family. As to expression, found in liver.

It is found in the microsome membrane. Its subcellular location is the endoplasmic reticulum membrane. The catalysed reaction is cis-stilbene oxide + H2O = (1R,2R)-hydrobenzoin. The enzyme catalyses 1-(4-methoxyphenyl)-N-methyl-N-[(3-methyloxetan-3-yl)methyl]methanamine + H2O = 2-{[(4-methoxybenzyl)(methyl)amino]methyl}-2-methylpropane-1,3-diol. It catalyses the reaction 8,9-epoxy-(5Z,11Z,14Z)-eicosatrienoate + H2O = 8,9-dihydroxy-(5Z,11Z,14Z)-eicosatrienoate. It carries out the reaction 11,12-epoxy-(5Z,8Z,14Z)-eicosatrienoate + H2O = 11,12-dihydroxy-(5Z,8Z,14Z)-eicosatrienoate. The catalysed reaction is 2-(5Z,8Z,11Z,14Z-eicosatetraenoyl)-glycerol + H2O = glycerol + (5Z,8Z,11Z,14Z)-eicosatetraenoate + H(+). Inhibited by 10-hydroxystearamide and methoxy-arachidonyl fluorophosphate. In terms of biological role, biotransformation enzyme that catalyzes the hydrolysis of arene and aliphatic epoxides to less reactive and more water soluble dihydrodiols by the trans addition of water. Plays a role in the metabolism of endogenous lipids such as epoxide-containing fatty acids. Metabolizes the abundant endocannabinoid 2-arachidonoylglycerol (2-AG) to free arachidonic acid (AA) and glycerol. Binds 20(S)-hydroxycholesterol (20(S)-OHC). The sequence is that of Epoxide hydrolase 1 from Homo sapiens (Human).